The sequence spans 644 residues: MSSSRKQARLDAKTNIESLSVQPYPNSNKVYIEGSRPDIRVPMREISLADSLVGGTKESPIFEPNEPIQVYDTSGVYTDPSYDIDVYKGLPKLRQEWIEERNDTELLDGVSSVYSQERLADETLDELRYGNLPTIRRAKQGQCVTQLHYARQGIITPEMEYIAIRENMGRQKFADEQLNHQHPGHSFGANLPKEITPEFVRREVAEGRAIIPSNINHPEAEPMIIGRNFLIKVNANIGNSSVSSSIEEEVEKLVWSTRWGGDTVMDLSTGRNIHETREWILRNSPVPIGTVPMYQALEKVNGVAENLNWEVMRDTLIEQAEQGVDYFTIHAGLLLRYVPMTAKRVTGIVSRGGSIIAKWCLAHHQESFLYTHFREICEICAKYDVALSLGDGLRPGSVADANDEAQFAELRTLGELTKVAWEYDVQVIIEGPGHVPMHMIKENMDEQLKHCHEAPFYTLGPLTTDIAPGYDHITSGIGAAMIGWYGCAMLCYVTPKEHLGLPNKDDVKTGLITYKLAAHAGDLAKGHPGAQIRDNALSKARFEFRWEDQFNLSLDPITAREYHDETLPQESGKVAHFCSMCGPKFCSMKISQEVREYAKDSEQVALDQAIEIKMIDDPLEGMRQKSEEFKASGSELYHPVVEAE.

Substrate is bound by residues Asn236, Met265, Tyr294, His330, 350–352 (SRG), 391–394 (DGLR), and Glu430. His434 contacts Zn(2+). Tyr457 contacts substrate. A Zn(2+)-binding site is contributed by His498. [4Fe-4S] cluster contacts are provided by Cys578, Cys581, and Cys586.

It belongs to the ThiC family. Homodimer. [4Fe-4S] cluster is required as a cofactor.

The enzyme catalyses 5-amino-1-(5-phospho-beta-D-ribosyl)imidazole + S-adenosyl-L-methionine = 4-amino-2-methyl-5-(phosphooxymethyl)pyrimidine + CO + 5'-deoxyadenosine + formate + L-methionine + 3 H(+). Its pathway is cofactor biosynthesis; thiamine diphosphate biosynthesis. Its function is as follows. Catalyzes the synthesis of the hydroxymethylpyrimidine phosphate (HMP-P) moiety of thiamine from aminoimidazole ribotide (AIR) in a radical S-adenosyl-L-methionine (SAM)-dependent reaction. This is Phosphomethylpyrimidine synthase from Aliivibrio fischeri (strain ATCC 700601 / ES114) (Vibrio fischeri).